A 453-amino-acid polypeptide reads, in one-letter code: Cholecystokinin receptor (453 aa).

Residues 1–64 (MESLRSLSNI…ILDRKKPSPS (64 aa)) are Extracellular-facing. N-linked (GlcNAc...) asparagine glycans are attached at residues Asn-9, Asn-22, Asn-30, Asn-35, and Asn-39. The chain crosses the membrane as a helical span at residues 65-94 (DLNLWVRIVMYSVIFLLSVFGNTLIIIVLV). The Cytoplasmic segment spans residues 95-104 (MNKRLRTITN). Residues 105-131 (SFLLSLALSDLMVAVLCMPFTLIPNLM) traverse the membrane as a helical segment. Over 132–142 (ENFIFGEVICR) the chain is Extracellular. The cysteines at positions 141 and 223 are disulfide-linked. A helical transmembrane segment spans residues 143–164 (AAAYFMGLSVSVSTFNLVAISI). Residues 165–184 (ERYSAICNPLKSRVWQTRSH) are Cytoplasmic-facing. Residues 185–205 (AYRVIAATWVLSSIIMIPYLV) form a helical membrane-spanning segment. Over 206–237 (YNKTVTFPMKDRRVGHQCRLVWPSKQVQQAWY) the chain is Extracellular. A helical membrane pass occupies residues 238 to 261 (VLLLTILFFIPGVVMIVAYGLISR). At 262-343 (ELYRGIQFEM…KLMAKKRVIR (82 aa)) the chain is on the cytoplasmic side. A helical transmembrane segment spans residues 344 to 364 (MLIVIVAMFFICWMPIFVANT). The Extracellular portion of the chain corresponds to 365 to 379 (WKAFDELSAFNTLTG). A helical membrane pass occupies residues 380 to 403 (APISFIHLLSYTSACVNPLIYCFM). Cys-401 is lipidated: S-palmitoyl cysteine. Residues 404-453 (NKRFRKAFLGTFSSCIKPCRNFRDTDEDIAATGASLSKFSYTTVSSLGPA) lie on the Cytoplasmic side of the membrane.

This sequence belongs to the G-protein coupled receptor 1 family. Brain and stomach.

It localises to the cell membrane. Its function is as follows. Receptor for cholecystokinin. This receptor mediates its action by association with G proteins that activate a phosphatidylinositol-calcium second messenger system. Has high affinity for CCK-8 and low affinities for gastrin-17-I, CCK-4, and unsulfated CCK-8. In Xenopus laevis (African clawed frog), this protein is Cholecystokinin receptor (cckar).